Consider the following 126-residue polypeptide: Protein translocase subunit SecE (126 aa).

The next 3 membrane-spanning stretches (helical) occupy residues 18 to 38 (LKWV…YLYG), 40 to 60 (LSVV…LGVA), and 97 to 117 (IVLA…GIMV).

This sequence belongs to the SecE/SEC61-gamma family. As to quaternary structure, component of the Sec protein translocase complex. Heterotrimer consisting of SecY, SecE and SecG subunits. The heterotrimers can form oligomers, although 1 heterotrimer is thought to be able to translocate proteins. Interacts with the ribosome. Interacts with SecDF, and other proteins may be involved. Interacts with SecA.

It localises to the cell inner membrane. In terms of biological role, essential subunit of the Sec protein translocation channel SecYEG. Clamps together the 2 halves of SecY. May contact the channel plug during translocation. This is Protein translocase subunit SecE from Vibrio cholerae serotype O1 (strain ATCC 39315 / El Tor Inaba N16961).